Consider the following 414-residue polypeptide: Eukaryotic initiation factor 4A-3 (414 aa).

At alanine 2 the chain carries N-acetylalanine. Residues 41–69 (DSFDAMELQPDLLRGIYAYGFEKPSAIQQ) carry the Q motif motif. In terms of domain architecture, Helicase ATP-binding spans 72–242 (IIPFCKGLDV…RKFMNKPVRI (171 aa)). 85–92 (AQSGTGKT) contributes to the ATP binding site. At serine 106 the chain carries Phosphoserine. A Phosphothreonine modification is found at threonine 147. The DEAD box motif lies at 190–193 (DEAD). The 162-residue stretch at 253 to 414 (GIKQFYVNVD…ELPSNVADLL (162 aa)) folds into the Helicase C-terminal domain.

The protein belongs to the DEAD box helicase family. eIF4A subfamily. EIF4F is a multi-subunit complex, the composition of which varies with external and internal environmental conditions. It is composed of at least EIF4A, EIF4E and EIF4G.

It localises to the cytoplasm. It catalyses the reaction ATP + H2O = ADP + phosphate + H(+). ATP-dependent RNA helicase which is a subunit of the eIF4F complex involved in cap recognition and is required for mRNA binding to ribosome. In the current model of translation initiation, eIF4A unwinds RNA secondary structures in the 5'-UTR of mRNAs which is necessary to allow efficient binding of the small ribosomal subunit, and subsequent scanning for the initiator codon. This chain is Eukaryotic initiation factor 4A-3 (TIF4A-3), found in Arabidopsis thaliana (Mouse-ear cress).